The following is a 161-amino-acid chain: uncharacterized protein (161 aa).

The next 2 membrane-spanning stretches (helical) occupy residues 13–35 and 40–62; these read VAAV…PHAN and VFSA…PFIS.

The protein resides in the cell membrane. This is an uncharacterized protein from Archaeoglobus fulgidus (strain ATCC 49558 / DSM 4304 / JCM 9628 / NBRC 100126 / VC-16).